Reading from the N-terminus, the 503-residue chain is Maturase K (503 aa).

It belongs to the intron maturase 2 family. MatK subfamily.

It localises to the plastid. The protein localises to the chloroplast. Usually encoded in the trnK tRNA gene intron. Probably assists in splicing its own and other chloroplast group II introns. The chain is Maturase K from Aethionema cordifolium (Lebanon stonecress).